The following is a 165-amino-acid chain: PTS system glucose-specific EIIA component (165 aa).

The PTS EIIA type-1 domain occupies 34 to 138; it reads DPVFAQKMMG…SSITPIIISN (105 aa). Zn(2+) contacts are provided by histidine 71 and histidine 86. Catalysis depends on histidine 86, which acts as the Tele-phosphohistidine intermediate; for EIIA activity. Phosphohistidine; by HPr is present on histidine 86.

As to quaternary structure, heterodimer with glycerol kinase (glpk). The cofactor is Zn(2+).

Its subcellular location is the cytoplasm. Its function is as follows. The phosphoenolpyruvate-dependent sugar phosphotransferase system (sugar PTS), a major carbohydrate active transport system, catalyzes the phosphorylation of incoming sugar substrates concomitantly with their translocation across the cell membrane. The enzyme II complex composed of PtsG and Crr is involved in glucose transport. The chain is PTS system glucose-specific EIIA component (crr) from Oceanobacillus iheyensis (strain DSM 14371 / CIP 107618 / JCM 11309 / KCTC 3954 / HTE831).